The sequence spans 114 residues: Cystatin Pr17a (114 aa).

The first 18 residues, 1-18 (MSCLKIITLFLFLAAVIA), serve as a signal peptide directing secretion. Positions 31–109 (GAPEQINPND…QAWLKKTSVK (79 aa)) constitute a Cystatin domain. An intrachain disulfide couples Cys93 to Cys113.

It belongs to the cystatin family. Expressed by the venom gland (posterior main gland) (at protein level).

It is found in the secreted. This is Cystatin Pr17a from Platymeris rhadamanthus (Red spot assassin bug).